We begin with the raw amino-acid sequence, 87 residues long: Small ribosomal subunit protein uS17 (87 aa).

The protein belongs to the universal ribosomal protein uS17 family. Part of the 30S ribosomal subunit.

In terms of biological role, one of the primary rRNA binding proteins, it binds specifically to the 5'-end of 16S ribosomal RNA. The sequence is that of Small ribosomal subunit protein uS17 from Thioalkalivibrio sulfidiphilus (strain HL-EbGR7).